Here is a 126-residue protein sequence, read N- to C-terminus: Large ribosomal subunit protein uL22 (126 aa).

Belongs to the universal ribosomal protein uL22 family. Part of the 50S ribosomal subunit.

Its function is as follows. This protein binds specifically to 23S rRNA; its binding is stimulated by other ribosomal proteins, e.g. L4, L17, and L20. It is important during the early stages of 50S assembly. It makes multiple contacts with different domains of the 23S rRNA in the assembled 50S subunit and ribosome. In terms of biological role, the globular domain of the protein is located near the polypeptide exit tunnel on the outside of the subunit, while an extended beta-hairpin is found that lines the wall of the exit tunnel in the center of the 70S ribosome. The sequence is that of Large ribosomal subunit protein uL22 from Caulobacter vibrioides (strain ATCC 19089 / CIP 103742 / CB 15) (Caulobacter crescentus).